We begin with the raw amino-acid sequence, 186 residues long: Probable RNA 2'-phosphotransferase (186 aa).

It belongs to the KptA/TPT1 family.

In terms of biological role, removes the 2'-phosphate from RNA via an intermediate in which the phosphate is ADP-ribosylated by NAD followed by a presumed transesterification to release the RNA and generate ADP-ribose 1''-2''-cyclic phosphate (APPR&gt;P). May function as an ADP-ribosylase. The sequence is that of Probable RNA 2'-phosphotransferase from Agrobacterium fabrum (strain C58 / ATCC 33970) (Agrobacterium tumefaciens (strain C58)).